We begin with the raw amino-acid sequence, 545 residues long: tRNA-2-methylthio-N(6)-dimethylallyladenosine synthase (545 aa).

A disordered region spans residues 1-32 (MSSASPLARCCDEATPSAGPRAAQPPYHGPVT). Residues 58–174 (RTYQVRTYGC…LPTLLERARH (117 aa)) enclose the MTTase N-terminal domain. [4Fe-4S] cluster-binding residues include Cys67, Cys103, Cys137, Cys211, Cys215, and Cys218. The region spanning 197–433 (RESAYAAWVS…IALQEQISLE (237 aa)) is the Radical SAM core domain. The region spanning 436–504 (RALVGQAVEV…PHHLIADAGV (69 aa)) is the TRAM domain.

Belongs to the methylthiotransferase family. MiaB subfamily. In terms of assembly, monomer. Requires [4Fe-4S] cluster as cofactor.

It localises to the cytoplasm. It carries out the reaction N(6)-dimethylallyladenosine(37) in tRNA + (sulfur carrier)-SH + AH2 + 2 S-adenosyl-L-methionine = 2-methylsulfanyl-N(6)-dimethylallyladenosine(37) in tRNA + (sulfur carrier)-H + 5'-deoxyadenosine + L-methionine + A + S-adenosyl-L-homocysteine + 2 H(+). Catalyzes the methylthiolation of N6-(dimethylallyl)adenosine (i(6)A), leading to the formation of 2-methylthio-N6-(dimethylallyl)adenosine (ms(2)i(6)A) at position 37 in tRNAs that read codons beginning with uridine. The sequence is that of tRNA-2-methylthio-N(6)-dimethylallyladenosine synthase from Mycobacterium bovis (strain BCG / Pasteur 1173P2).